A 269-amino-acid polypeptide reads, in one-letter code: Cytolethal distending toxin subunit B homolog (269 aa).

The first 22 residues, 1 to 22, serve as a signal peptide directing secretion; that stretch reads MKKPVFFLLTMIICSYISFACA.

It localises to the secreted. Functionally, produces a CDT (cytolethal distending toxin) activity, which causes DNA damage in intoxicated cells. This damage induces G2/M cell cycle arrest, chromatin fragmentation, cell distention and nucleus enlargement. In Salmonella typhi, this protein is Cytolethal distending toxin subunit B homolog (cdtB).